The primary structure comprises 665 residues: DNA mismatch repair protein MutL (665 aa).

This sequence belongs to the DNA mismatch repair MutL/HexB family.

Functionally, this protein is involved in the repair of mismatches in DNA. It is required for dam-dependent methyl-directed DNA mismatch repair. May act as a 'molecular matchmaker', a protein that promotes the formation of a stable complex between two or more DNA-binding proteins in an ATP-dependent manner without itself being part of a final effector complex. In Acidobacterium capsulatum (strain ATCC 51196 / DSM 11244 / BCRC 80197 / JCM 7670 / NBRC 15755 / NCIMB 13165 / 161), this protein is DNA mismatch repair protein MutL.